Reading from the N-terminus, the 343-residue chain is Dihydroorotate dehydrogenase (quinone) (343 aa).

FMN contacts are provided by residues 61-65 (AGLDK) and Thr-85. Lys-65 contributes to the substrate binding site. Residue 110-114 (NRMGF) coordinates substrate. The FMN site is built by Asn-138 and Asn-171. Asn-171 is a binding site for substrate. Ser-174 acts as the Nucleophile in catalysis. Substrate is bound at residue Asn-176. Positions 216 and 244 each coordinate FMN. Substrate is bound at residue 245 to 246 (NT). Residues Gly-267, Gly-296, and 317 to 318 (YS) contribute to the FMN site.

Belongs to the dihydroorotate dehydrogenase family. Type 2 subfamily. As to quaternary structure, monomer. FMN is required as a cofactor.

Its subcellular location is the cell membrane. The enzyme catalyses (S)-dihydroorotate + a quinone = orotate + a quinol. It functions in the pathway pyrimidine metabolism; UMP biosynthesis via de novo pathway; orotate from (S)-dihydroorotate (quinone route): step 1/1. Its function is as follows. Catalyzes the conversion of dihydroorotate to orotate with quinone as electron acceptor. This Stutzerimonas stutzeri (strain A1501) (Pseudomonas stutzeri) protein is Dihydroorotate dehydrogenase (quinone).